Consider the following 96-residue polypeptide: Co-chaperonin GroES (96 aa).

The protein belongs to the GroES chaperonin family. In terms of assembly, heptamer of 7 subunits arranged in a ring. Interacts with the chaperonin GroEL.

The protein resides in the cytoplasm. In terms of biological role, together with the chaperonin GroEL, plays an essential role in assisting protein folding. The GroEL-GroES system forms a nano-cage that allows encapsulation of the non-native substrate proteins and provides a physical environment optimized to promote and accelerate protein folding. GroES binds to the apical surface of the GroEL ring, thereby capping the opening of the GroEL channel. The polypeptide is Co-chaperonin GroES (Shewanella amazonensis (strain ATCC BAA-1098 / SB2B)).